The sequence spans 457 residues: Peptidyl-prolyl cis-trans isomerase FKBP5 (457 aa).

Methionine 1 carries the N-acetylmethionine modification. Residues 1–26 (MTTDEGAKNNGESPTATVAEQGEDIT) form a disordered region. Phosphoserine is present on serine 13. PPIase FKBP-type domains follow at residues 50-138 (GDKV…LDFK) and 165-251 (GATV…KSFE). TPR repeat units lie at residues 268–301 (AAIV…LEME), 317–350 (LAAF…DSAN), and 351–384 (GKGL…NPQN). The disordered stretch occupies residues 420–457 (DAKEEANKAMGKKTSEGVTNEKGTDSQAMEEEKPEGHV). Serine 445 carries the post-translational modification Phosphoserine.

In terms of assembly, part of a heteromultimeric cytoplasmic complex with HSP90AA1, HSPA1A/HSPA1B and steroid receptors. Upon ligand binding dissociates from the complex and FKBP4 takes its place. Interacts with functionally mature heterooligomeric progesterone receptor complexes along with HSP90 and TEBP. Interacts with IFI44L; this interaction modulates the kinase activity of IKBKB and IKBKE. Interacts with IKBKB and IKBKE.

The protein resides in the cytoplasm. It localises to the nucleus. The catalysed reaction is [protein]-peptidylproline (omega=180) = [protein]-peptidylproline (omega=0). With respect to regulation, inhibited by FK506 but not cyclosporin. In terms of biological role, immunophilin protein with PPIase and co-chaperone activities. Component of unligated steroid receptors heterocomplexes through interaction with heat-shock protein 90 (HSP90). Plays a role in the intracellular trafficking of heterooligomeric forms of steroid hormone receptors maintaining the complex into the cytoplasm when unliganded. Acts as a regulator of Akt/AKT1 activity by promoting the interaction between Akt/AKT1 and PHLPP1, thereby enhancing dephosphorylation and subsequent activation of Akt/AKT1. Interacts with IKBKE and IKBKB which facilitates IKK complex assembly leading to increased IKBKE and IKBKB kinase activity, NF-kappaB activation, and IFN production. In Pongo abelii (Sumatran orangutan), this protein is Peptidyl-prolyl cis-trans isomerase FKBP5 (FKBP5).